A 326-amino-acid chain; its full sequence is Phospho-N-acetylmuramoyl-pentapeptide-transferase (326 aa).

A run of 10 helical transmembrane segments spans residues 2-22, 51-71, 73-93, 113-133, 143-163, 175-195, 199-219, 225-245, 250-270, and 305-325; these read ILAT…FPYF, VPPM…LLWV, LTPE…LGFI, ILIQ…YSAE, GVII…IVGS, GLAA…AYIT, MNIT…LWFN, IFMG…TSVL, MLFA…IIQI, and VIVM…ITFL.

The protein belongs to the glycosyltransferase 4 family. MraY subfamily. Mg(2+) is required as a cofactor.

It localises to the cell membrane. The catalysed reaction is UDP-N-acetyl-alpha-D-muramoyl-L-alanyl-gamma-D-glutamyl-meso-2,6-diaminopimeloyl-D-alanyl-D-alanine + di-trans,octa-cis-undecaprenyl phosphate = di-trans,octa-cis-undecaprenyl diphospho-N-acetyl-alpha-D-muramoyl-L-alanyl-D-glutamyl-meso-2,6-diaminopimeloyl-D-alanyl-D-alanine + UMP. It participates in cell wall biogenesis; peptidoglycan biosynthesis. Functionally, catalyzes the initial step of the lipid cycle reactions in the biosynthesis of the cell wall peptidoglycan: transfers peptidoglycan precursor phospho-MurNAc-pentapeptide from UDP-MurNAc-pentapeptide onto the lipid carrier undecaprenyl phosphate, yielding undecaprenyl-pyrophosphoryl-MurNAc-pentapeptide, known as lipid I. The protein is Phospho-N-acetylmuramoyl-pentapeptide-transferase of Wolbachia sp. subsp. Drosophila simulans (strain wRi).